The following is a 1041-amino-acid chain: Toll-like receptor 8 (1041 aa).

A signal peptide spans M1–A26. Residues E27–T827 lie on the Extracellular side of the membrane. N29, N42, N80, N88, and N115 each carry an N-linked (GlcNAc...) asparagine glycan. C36 and C49 form a disulfide bridge. LRR repeat units lie at residues N126 to S147, L148 to R168, N171 to E193, N202 to S223, L224 to G244, and N247 to V268. N160 carries an N-linked (GlcNAc...) asparagine glycan. An intrachain disulfide couples C181 to C187. N-linked (GlcNAc...) asparagine glycosylation is present at N247. 2 disulfide bridges follow: C257-C270 and C260-C267. N-linked (GlcNAc...) asparagine glycans are attached at residues N285 and N293. 3 LRR repeats span residues Q288–N309, H312–T334, and R338–S360. N358 and N362 each carry an N-linked (GlcNAc...) asparagine glycan. LRR repeat units lie at residues S368–P389, N395–N416, and N419–S440. 2 N-linked (GlcNAc...) asparagine glycosylation sites follow: N395 and N416. Residue N443 is glycosylated (N-linked (GlcNAc...) asparagine). A disulfide bond links C479 and C509. LRR repeat units lie at residues Y482–N503, D506–S527, H531–T551, and D555–L577. N-linked (GlcNAc...) asparagine glycosylation is found at N511 and N546. N-linked (GlcNAc...) asparagine glycans are attached at residues N582 and N590. 7 LRR repeats span residues N585–E606, S609–R630, N640–N661, S665–Q685, R689–F710, S713–E734, and S737–T758. 2 N-linked (GlcNAc...) asparagine glycosylation sites follow: N640 and N680. Residue N752 is glycosylated (N-linked (GlcNAc...) asparagine). Positions N772–S824 constitute an LRRCT domain. A disulfide bridge links C776 with C803. A helical membrane pass occupies residues A828–A848. At H849 to Y1041 the chain is on the cytoplasmic side. A TIR domain is found at T878–V1022.

Belongs to the Toll-like receptor family. As to quaternary structure, homodimer. Interacts with MYD88 via their respective TIR domains. Interacts with UNC93B1. Interacts with BTK. Interacts with SMPDL3B. Ubiquitinated by RNF216; leading to degradation by the proteasome. In terms of processing, proteolytic processing occurs in monocytes and monocyte-derived macrophages by both furin-like proprotein convertase and cathepsins. The cleavage is necessary for dimer formation and subsequent activation. Expressed in myeloid dendritic cells, monocytes, and monocyte-derived dendritic cells.

The protein resides in the endosome membrane. Activated by RNAs having enough uridines. Endosomal receptor that plays a key role in innate and adaptive immunity. Controls host immune response against pathogens through recognition of RNA degradation products specific to microorganisms that are initially processed by RNASET2. Recognizes GU-rich single-stranded RNA (GU-rich RNA) derived from SARS-CoV-2, SARS-CoV-1 and HIV-1 viruses. Upon binding to agonists, undergoes dimerization that brings TIR domains from the two molecules into direct contact, leading to the recruitment of TIR-containing downstream adapter MYD88 through homotypic interaction. In turn, the Myddosome signaling complex is formed involving IRAK4, IRAK1, TRAF6, TRAF3 leading to activation of downstream transcription factors NF-kappa-B and IRF7 to induce pro-inflammatory cytokines and interferons, respectively. The protein is Toll-like receptor 8 of Homo sapiens (Human).